Here is a 205-residue protein sequence, read N- to C-terminus: Holliday junction branch migration complex subunit RuvA (205 aa).

Positions 1–65 (MIAKLKGILD…EDRIHLFGFL (65 aa)) are domain I. The domain II stretch occupies residues 66–144 (DNTEKVAFNM…NINTIANNTS (79 aa)). Residues 145 to 153 (LATLSTDSN) form a flexible linker region. Residues 154 to 205 (THDNILSDAITALIALGISRAEATQILSDIYALSPSISVNELVRTALQRRAK) are domain III.

This sequence belongs to the RuvA family. As to quaternary structure, homotetramer. Forms an RuvA(8)-RuvB(12)-Holliday junction (HJ) complex. HJ DNA is sandwiched between 2 RuvA tetramers; dsDNA enters through RuvA and exits via RuvB. An RuvB hexamer assembles on each DNA strand where it exits the tetramer. Each RuvB hexamer is contacted by two RuvA subunits (via domain III) on 2 adjacent RuvB subunits; this complex drives branch migration. In the full resolvosome a probable DNA-RuvA(4)-RuvB(12)-RuvC(2) complex forms which resolves the HJ.

It localises to the cytoplasm. In terms of biological role, the RuvA-RuvB-RuvC complex processes Holliday junction (HJ) DNA during genetic recombination and DNA repair, while the RuvA-RuvB complex plays an important role in the rescue of blocked DNA replication forks via replication fork reversal (RFR). RuvA specifically binds to HJ cruciform DNA, conferring on it an open structure. The RuvB hexamer acts as an ATP-dependent pump, pulling dsDNA into and through the RuvAB complex. HJ branch migration allows RuvC to scan DNA until it finds its consensus sequence, where it cleaves and resolves the cruciform DNA. In Orientia tsutsugamushi (strain Ikeda) (Rickettsia tsutsugamushi), this protein is Holliday junction branch migration complex subunit RuvA.